The sequence spans 1289 residues: uncharacterized protein (1289 aa).

The MHD1 domain maps to 615–733 (LDMYDVLKEL…DGMLSYSAQL (119 aa)). The segment at 745 to 774 (DEPSYSLESSDTRSSLSLNNANVNHEKSRS) is disordered. Over residues 748–762 (SYSLESSDTRSSLSL) the composition is skewed to low complexity. Residues 834-966 (AQYHSSHNLE…DDGFPIDFSL (133 aa)) enclose the C2 domain. The MHD2 domain occupies 1044–1184 (YDAILPLFDY…KSVSELKDEV (141 aa)).

The protein resides in the cytoplasm. This is an uncharacterized protein from Saccharomyces cerevisiae (strain ATCC 204508 / S288c) (Baker's yeast).